Consider the following 319-residue polypeptide: ATP-dependent 6-phosphofructokinase (319 aa).

Residue glycine 11 participates in ATP binding. 21–25 (RAVVR) is an ADP binding site. ATP contacts are provided by residues 72 to 73 (RS) and 102 to 105 (GDGS). Aspartate 103 serves as a coordination point for Mg(2+). 125-127 (TID) contributes to the substrate binding site. The active-site Proton acceptor is the aspartate 127. Residue arginine 154 coordinates ADP. Residues arginine 162 and 169 to 171 (MGR) contribute to the substrate site. ADP is bound by residues 185–187 (GAE) and 213–215 (KMH). Substrate is bound by residues glutamate 222, arginine 243, and 249-252 (HIQR).

This sequence belongs to the phosphofructokinase type A (PFKA) family. ATP-dependent PFK group I subfamily. Prokaryotic clade 'B1' sub-subfamily. Homotetramer. Requires Mg(2+) as cofactor.

The protein localises to the cytoplasm. The catalysed reaction is beta-D-fructose 6-phosphate + ATP = beta-D-fructose 1,6-bisphosphate + ADP + H(+). The protein operates within carbohydrate degradation; glycolysis; D-glyceraldehyde 3-phosphate and glycerone phosphate from D-glucose: step 3/4. Allosterically activated by ADP and other diphosphonucleosides, and allosterically inhibited by phosphoenolpyruvate. Catalyzes the phosphorylation of D-fructose 6-phosphate to fructose 1,6-bisphosphate by ATP, the first committing step of glycolysis. The chain is ATP-dependent 6-phosphofructokinase from Clostridium tetani (strain Massachusetts / E88).